The following is a 553-amino-acid chain: Solute carrier family 22 member 12 (553 aa).

Residues 9-29 form a helical membrane-spanning segment; it reads LVGGLGRFQVLQTMALMVSIM. Residues N56 and N102 are each glycosylated (N-linked (GlcNAc...) asparagine). The next 11 helical transmembrane spans lie at 146 to 166, 174 to 194, 195 to 215, 232 to 252, 260 to 280, 351 to 371, 378 to 398, 407 to 427, 435 to 455, 466 to 486, and 495 to 515; these read PMAQSIYLAGILVGAAACGPA, LVLTWSYLQMAVMGTAAAFAP, AFPVYCLFRFLLAFAVAGVMM, LVMTLNSLGFSFGHGLTAAVA, LLQLVVSVPFFLCFLYSWWLA, CISTLCWFAFGFTFFGLALDL, IFLLQMFIGVVDIPAKMGALL, PTLAASLLLAGLCILANTLVP, SALAVLGLGGVGAAFTCITIY, MTAVGLGQMAARGGAILGPLV, and WLPLLVYGTVPVLSGLAALLL. The residue at position 542 (T542) is a Phosphothreonine.

It belongs to the major facilitator (TC 2.A.1) superfamily. Organic cation transporter (TC 2.A.1.19) family. Interacts with PDZK1. N-glycosylated. In terms of tissue distribution, detected in kidney (at protein level). Detected in fetal and adult kidney. Detected in epithelial cells of proximal tubules in renal cortex.

The protein localises to the apical cell membrane. It catalyses the reaction urate(out) + (S)-lactate(in) = urate(in) + (S)-lactate(out). It carries out the reaction nicotinate(in) + urate(out) = nicotinate(out) + urate(in). The catalysed reaction is urate(out) + n chloride(in) = urate(in) + n chloride(out). The enzyme catalyses orotate(out) + nicotinate(in) = orotate(in) + nicotinate(out). In terms of biological role, electroneutral antiporter that translocates urate across the apical membrane of proximal tubular cells in exchange for monovalent organic or inorganic anions. Involved in renal reabsorption of urate and helps maintaining blood levels of uric acid. Mediates urate uptake by an exchange with organic anions such as (S)-lactate and nicotinate, and inorganic anion Cl(-). Other inorganic anions such as Br(-), I(-) and NO3(-) may also act as counteranions that exchange for urate. Also mediates orotate tubular uptake coupled with nicotinate efflux and to a lesser extent with lactate efflux, therefore displaying a potential role in orotate renal reabsorption. Orotate transport is Cl(-)-dependent. The polypeptide is Solute carrier family 22 member 12 (Homo sapiens (Human)).